The chain runs to 416 residues: Serine hydroxymethyltransferase (416 aa).

Residues leucine 121 and glycine 125–leucine 127 each bind (6S)-5,6,7,8-tetrahydrofolate. An N6-(pyridoxal phosphate)lysine modification is found at lysine 230. Serine 355–phenylalanine 357 provides a ligand contact to (6S)-5,6,7,8-tetrahydrofolate.

This sequence belongs to the SHMT family. In terms of assembly, homodimer. Requires pyridoxal 5'-phosphate as cofactor.

It is found in the cytoplasm. The enzyme catalyses (6R)-5,10-methylene-5,6,7,8-tetrahydrofolate + glycine + H2O = (6S)-5,6,7,8-tetrahydrofolate + L-serine. It functions in the pathway one-carbon metabolism; tetrahydrofolate interconversion. The protein operates within amino-acid biosynthesis; glycine biosynthesis; glycine from L-serine: step 1/1. In terms of biological role, catalyzes the reversible interconversion of serine and glycine with tetrahydrofolate (THF) serving as the one-carbon carrier. This reaction serves as the major source of one-carbon groups required for the biosynthesis of purines, thymidylate, methionine, and other important biomolecules. Also exhibits THF-independent aldolase activity toward beta-hydroxyamino acids, producing glycine and aldehydes, via a retro-aldol mechanism. The polypeptide is Serine hydroxymethyltransferase (Streptococcus thermophilus (strain CNRZ 1066)).